Consider the following 477-residue polypeptide: Protein translocase subunit SecY (477 aa).

The next 10 membrane-spanning stretches (helical) occupy residues 28–48 (FMIS…LAII), 67–89 (FFSL…AVGI), 130–150 (IITL…ATNS), 165–185 (DFVA…VFLG), 196–216 (GITL…FIAA), 234–254 (AISF…TTFI), 286–306 (SAGV…VTIA), 329–349 (GIVL…YIQI), 387–407 (FIGA…SALI), and 413–433 (LSLG…FMSA).

This sequence belongs to the SecY/SEC61-alpha family. As to quaternary structure, component of the Sec protein translocase complex. Heterotrimer consisting of SecY, SecE and SecG subunits. The heterotrimers can form oligomers, although 1 heterotrimer is thought to be able to translocate proteins. Interacts with the ribosome. Interacts with SecDF, and other proteins may be involved. Interacts with SecA.

The protein localises to the cell membrane. The central subunit of the protein translocation channel SecYEG. Consists of two halves formed by TMs 1-5 and 6-10. These two domains form a lateral gate at the front which open onto the bilayer between TMs 2 and 7, and are clamped together by SecE at the back. The channel is closed by both a pore ring composed of hydrophobic SecY resides and a short helix (helix 2A) on the extracellular side of the membrane which forms a plug. The plug probably moves laterally to allow the channel to open. The ring and the pore may move independently. In Mycoplasma pneumoniae (strain ATCC 29342 / M129 / Subtype 1) (Mycoplasmoides pneumoniae), this protein is Protein translocase subunit SecY.